The chain runs to 391 residues: MSAEAKMTTSTATQAGAEALERLRQWPGEHRVAVGLSGGVDSSLTAALMVEAGWEVEGLTLWLMSGKGACCAEGLVDAAGICQQLGVPHHVVDSRDTFVREIVQGLVDGYRAGITPLPCSKCNRSVKFGPMLAWAEQERNLPRIATGHYARIRLDREDGRWKLLRGLDRRKDQSYFLYDLPQEVLARVVFPLGELTKADTRLEAGRHGLRTADKPESQDLCLADHHGSMRAFLDAYIPPRDGEIVLQDGTVVGQHDGIEHFTIGQRKGLGIAWSEPLHVVKLDAAMNQVVVATRAEAGRTGCEVGAMNWVSIAPPPLDSPMEVEVQVRYRSEPVRAHLICIEATANDRAKERPHRCKLTFQEPQFSITPGQGAVLYDGEVVLGGGLIDSPV.

ATP contacts are provided by residues 35-42 (GLSGGVDS) and L61. Catalysis depends on C122, which acts as the Nucleophile. An intrachain disulfide couples C122 to C221. G147 is an ATP binding site. Residues 171-173 (KDQ) are interaction with tRNA. C221 functions as the Cysteine persulfide intermediate in the catalytic mechanism. An interaction with tRNA region spans residues 328–329 (RY).

This sequence belongs to the MnmA/TRMU family.

It localises to the cytoplasm. The catalysed reaction is S-sulfanyl-L-cysteinyl-[protein] + uridine(34) in tRNA + AH2 + ATP = 2-thiouridine(34) in tRNA + L-cysteinyl-[protein] + A + AMP + diphosphate + H(+). Its function is as follows. Catalyzes the 2-thiolation of uridine at the wobble position (U34) of tRNA, leading to the formation of s(2)U34. This chain is tRNA-specific 2-thiouridylase MnmA, found in Synechococcus sp. (strain CC9311).